The chain runs to 264 residues: Interleukin-33 (264 aa).

Residues 1-67 (MRPRMKYSNS…ETCYFGKEPA (67 aa)) form a homeodomain-like HTH domain region. A propeptide spanning residues 1–101 (MRPRMKYSNS…RSLLGSIQAF (101 aa)) is cleaved from the precursor. Residues 66 to 108 (PAKRYSLKSGSKHEGRLSTCLPDSRKRSLLGSIQAFAASVDTL) are interaction with RELA.

The protein belongs to the IL-1 family. Highly divergent. Forms a 1:1:1 heterotrimeric complex with its primary high-affinity receptor IL1RL1 and the coreceptor IL1RAP. Interacts with cargo receptor TMED10; the interaction mediates the translocation from the cytoplasm into the ERGIC (endoplasmic reticulum-Golgi intermediate compartment) and thereby secretion. In terms of processing, the full-length protein can be released from cells and is able to signal via the IL1RL1/ST2 receptor. However, proteolytic processing by CELA1, CSTG/cathepsin G and ELANE/neutrophil elastase produces C-terminal peptides that are more active than the unprocessed full-length protein. May also be proteolytically processed by calpains. Proteolytic cleavage mediated by apoptotic caspases including CASP3 and CASP7 results in IL33 inactivation. In vitro proteolytic cleavage by CASP1 was reported but could not be confirmed in vivo suggesting that IL33 is probably not a direct substrate for that caspase.

Its subcellular location is the nucleus. It localises to the chromosome. The protein resides in the cytoplasm. It is found in the cytoplasmic vesicle. The protein localises to the secretory vesicle. Its subcellular location is the secreted. Functionally, cytokine that binds to and signals through the IL1RL1/ST2 receptor which in turn activates NF-kappa-B and MAPK signaling pathways in target cells. Involved in the maturation of Th2 cells inducing the secretion of T-helper type 2-associated cytokines. Also involved in activation of mast cells, basophils, eosinophils and natural killer cells. Acts as a chemoattractant for Th2 cells, and may function as an 'alarmin', that amplifies immune responses during tissue injury. Induces rapid UCP2-dependent mitochondrial rewiring that attenuates the generation of reactive oxygen species and preserves the integrity of Krebs cycle required for persistent production of itaconate and subsequent GATA3-dependent differentiation of inflammation-resolving alternatively activated macrophages. In quiescent endothelia the uncleaved form is constitutively and abundantly expressed, and acts as a chromatin-associated nuclear factor with transcriptional repressor properties, it may sequester nuclear NF-kappaB/RELA, lowering expression of its targets. This form is rapidely lost upon angiogenic or pro-inflammatory activation. The sequence is that of Interleukin-33 from Rattus norvegicus (Rat).